Consider the following 413-residue polypeptide: Enhanced ethylene response protein 5 (413 aa).

One can recognise a PCI domain in the interval Val-216 to Pro-402.

In terms of assembly, interacts with EIN2 (via C-terminus). May also interact weakly with CSN8. Interacts with DSS1(V), AMPD, SAC3A, SAC3B and At5g61290 (AC Q9FLK4). Interacts with UCH1 and UCH2. Interacts with NUP1, anchoring the TREX-2 complex on the nuclear pore complex. Expressed at low levels in roots, leaves, stems and shoots. Detected in seedlings, roots, leaves and anthers.

It is found in the nucleus. Functionally, involved in the regulation of ethylene response. Probable TREX-2 component required for nuclear RNA export. The TREX-2 complex (transcription and export complex 2) functions in docking export-competent ribonucleoprotein particles (mRNPs) to the nuclear entrance of the nuclear pore complex (nuclear basket). TREX-2 participates in mRNA export and accurate chromatin positioning in the nucleus by tethering genes to the nuclear periphery. The chain is Enhanced ethylene response protein 5 from Arabidopsis thaliana (Mouse-ear cress).